The primary structure comprises 497 residues: Long chain base biosynthesis protein 2c (497 aa).

A helical membrane pass occupies residues 4-24; the sequence is VPFVTAVTTVFSYGVIFGFGH. The residue at position 319 (Lys-319) is an N6-(pyridoxal phosphate)lysine.

The protein belongs to the class-II pyridoxal-phosphate-dependent aminotransferase family. As to quaternary structure, heterodimer with LCB1. Component of the serine palmitoyltransferase (SPT) complex, composed of LCB1 and LCB2. It depends on pyridoxal 5'-phosphate as a cofactor.

The protein resides in the endoplasmic reticulum membrane. The catalysed reaction is L-serine + hexadecanoyl-CoA + H(+) = 3-oxosphinganine + CO2 + CoA. It functions in the pathway lipid metabolism; sphingolipid metabolism. Its function is as follows. Serine palmitoyltransferase (SPT). The heterodimer formed with LCB1 constitutes the catalytic core. The polypeptide is Long chain base biosynthesis protein 2c (Oryza sativa subsp. japonica (Rice)).